The chain runs to 236 residues: DNA repair protein RecO (236 aa).

It belongs to the RecO family.

Functionally, involved in DNA repair and RecF pathway recombination. The sequence is that of DNA repair protein RecO from Stutzerimonas stutzeri (strain A1501) (Pseudomonas stutzeri).